A 431-amino-acid polypeptide reads, in one-letter code: MSENQVIKPGGRLVGEVQVPGDKSISHRAIMLGALGEGETVVRGLLRGEDNLATLEAFRSMGVAFCEDGDGALRIAGRGLHGLQEPQDVIDCGNSGTTMRLMTGLLAGQQFFSVMTGDRFLRKRPMKRVVGPLTAMGAHILGRAGGEYAPLALQGKTLQGITHHSAVASAQVKSALLLGGLYAEGPTTVHEPHRSRDHSERMLTWFGADVRPFEGGVTLHPGSCLKGGEVIVPGDISSAAFFMVAALIVPGSELLIRQVGVNPTRSGVIDILRQMGGNIELLNERDCSGEPVADILVKASDLKGVEIGGAVIPRAIDEFPVISVAAAFAEGRTVIRDARELRVKETDRIASMCSQMGALGALVEPREDGMVITGGPSLGAAKVSSLGDHRIGMSMAVAALRASAPVTVTDTECTATSFPGFWELFNSVREH.

3-phosphoshikimate contacts are provided by K23, S24, and R28. Position 23 (K23) interacts with phosphoenolpyruvate. Phosphoenolpyruvate is bound by residues G96 and R124. Positions 169, 171, 317, and 344 each coordinate 3-phosphoshikimate. Residue Q171 participates in phosphoenolpyruvate binding. D317 functions as the Proton acceptor in the catalytic mechanism. Residues R348 and R390 each contribute to the phosphoenolpyruvate site.

This sequence belongs to the EPSP synthase family. In terms of assembly, monomer.

It is found in the cytoplasm. It catalyses the reaction 3-phosphoshikimate + phosphoenolpyruvate = 5-O-(1-carboxyvinyl)-3-phosphoshikimate + phosphate. The protein operates within metabolic intermediate biosynthesis; chorismate biosynthesis; chorismate from D-erythrose 4-phosphate and phosphoenolpyruvate: step 6/7. In terms of biological role, catalyzes the transfer of the enolpyruvyl moiety of phosphoenolpyruvate (PEP) to the 5-hydroxyl of shikimate-3-phosphate (S3P) to produce enolpyruvyl shikimate-3-phosphate and inorganic phosphate. This is 3-phosphoshikimate 1-carboxyvinyltransferase from Syntrophotalea carbinolica (strain DSM 2380 / NBRC 103641 / GraBd1) (Pelobacter carbinolicus).